We begin with the raw amino-acid sequence, 246 residues long: E3 ubiquitin-protein ligase MARCHF2 (246 aa).

The RING-CH-type zinc-finger motif lies at 56 to 116 (DTPSDGPFCR…ELCHTEFAVE (61 aa)). The tract at residues 56-116 (DTPSDGPFCR…ELCHTEFAVE (61 aa)) is required for inhibition of HIV-1 virus production and VSV G protein expression. Zn(2+)-binding residues include cysteine 64, cysteine 67, cysteine 80, cysteine 82, histidine 90, cysteine 93, cysteine 106, and cysteine 109. A required for interaction with IKBKG region spans residues 121–246 (PLTEWLKDPG…LKKVAEETPV (126 aa)). 2 consecutive transmembrane segments (helical) span residues 138–158 (LCCD…SGWL) and 175–195 (AVGL…WTLV).

As to quaternary structure, interacts with STX6; the interaction promotes MARCHF2-mediated ubiquitination and degradation of CFTR. Interacts with MARCHF3. Interacts with GOPC/CAL; the interaction leads to CFTR ubiquitination and degradation. Interacts with CFTR; the interaction leads to CFTR ubiqtuitination and degradation. Interacts (via PDZ domain) with DLG1 (via PDZ domains); the interaction leads to DLG1 ubiqtuitination and degradation. Interacts with ERGIC3. Interacts with ADRB2. Interacts with IKBKG/NEMO; during the late stages of macrophage viral and bacterial infection; the interaction leads to ubiquitination and degradation of IKBKG/NEMO. In terms of tissue distribution, broadly expressed.

The protein resides in the endoplasmic reticulum membrane. Its subcellular location is the lysosome membrane. It is found in the endosome membrane. It localises to the golgi apparatus membrane. The protein localises to the cytoplasm. The protein resides in the cell membrane. It catalyses the reaction S-ubiquitinyl-[E2 ubiquitin-conjugating enzyme]-L-cysteine + [acceptor protein]-L-lysine = [E2 ubiquitin-conjugating enzyme]-L-cysteine + N(6)-ubiquitinyl-[acceptor protein]-L-lysine.. It participates in protein modification; protein ubiquitination. Its function is as follows. E3 ubiquitin-protein ligase that may mediate ubiquitination of TFRC and CD86, and promote their subsequent endocytosis and sorting to lysosomes via multivesicular bodies. E3 ubiquitin ligases accept ubiquitin from an E2 ubiquitin-conjugating enzyme in the form of a thioester and then directly transfer the ubiquitin to targeted substrates. Together with GOPC/CAL mediates the ubiquitination and lysosomal degradation of CFTR. Ubiquitinates and therefore mediates the degradation of DLG1. Regulates the intracellular trafficking and secretion of alpha1-antitrypsin/SERPINA1 and HP/haptoglobin via ubiquitination and degradation of the cargo receptor ERGIC3. Negatively regulates the antiviral and antibacterial immune response by repression of the NF-kB and type 1 IFN signaling pathways, via MARCHF2-mediated K48-linked polyubiquitination of IKBKG/NEMO, resulting in its proteasomal degradation. May be involved in endosomal trafficking through interaction with STX6. (Microbial infection) Positively regulates the degradation of Vesicular stomatitis virus (VSV) G protein via the lysosomal degradation pathway. Represses HIV-1 viral production and may inhibit the translocation of HIV-1 env to the cell surface, resulting in decreased viral cell-cell transmission. The sequence is that of E3 ubiquitin-protein ligase MARCHF2 from Homo sapiens (Human).